Consider the following 204-residue polypeptide: Cytochrome P450 monooxygenase PC-23 (204 aa).

Cys-138 is a binding site for heme.

This sequence belongs to the cytochrome P450 family. Heme serves as cofactor.

It functions in the pathway secondary metabolite biosynthesis. Its function is as follows. Cytochrome P450 monooxygenase; part of the gene cluster that mediates the biosynthesis of the indole diterpenes penitrems. The geranylgeranyl diphosphate (GGPP) synthase penG catalyzes the first step in penitrem biosynthesis via conversion of farnesyl pyrophosphate and isopentyl pyrophosphate into geranylgeranyl pyrophosphate (GGPP). Condensation of indole-3-glycerol phosphate with GGPP by the prenyl transferase penC then forms 3-geranylgeranylindole (3-GGI). Epoxidation by the FAD-dependent monooxygenase penM leads to a epoxidized-GGI that is substrate of the terpene cyclase penB for cyclization to yield paspaline. Paspaline is subsequently converted to 13-desoxypaxilline by the cytochrome P450 monooxygenase penP, the latter being then converted to paxilline by the cytochrome P450 monooxygenase penQ. Paxilline is converted to beta-paxitriol via C-10 ketoreduction by the short-chain dehydrogenase PC-15 which can be monoprenylated at the C-20 by the indole diterpene prenyltransferase penD. A two-step elimination (acetylation and elimination) process performed by the O-acetyltransferase PC-16 and the P.simplicissimum ptmI-ortholog not yet identified in P.crustosum, leads to the production of the prenylated form of penijanthine. The FAD-linked oxidoreductase ptmO then converts the prenylated form of penijanthine into PC-M5 which is in turn transformed into PC-M4 by the aromatic dimethylallyltransferase PC-22. A series of oxidation steps involving 4 cytochrome P450 monooxygenases (PC-21, PC-05, PC-23, PC-20) and a FAD-dependent monooxygenase (PC-14) are required for the transformation of PC-M4 to penitrems A and E. Synthesis of these final products is proposed to proceed via penitrems D and C (PC-21, PC-05, PC-14) and penitrems B and F (PC-21, PC-05, PC-14, PC-23). This Penicillium crustosum (Blue mold fungus) protein is Cytochrome P450 monooxygenase PC-23.